The sequence spans 2017 residues: Rootletin (2017 aa).

Coiled coils occupy residues 70-262 and 318-444; these read ATEM…KVTN and ERDL…LETE. A compositionally biased stretch (polar residues) spans 464–483; sequence SESGVQLSGSERTADASNGS. Positions 464–518 are disordered; that stretch reads SESGVQLSGSERTADASNGSLRGLSGQRTPSPPRRSSPGRGRSPRRGPSPACSDS. A compositionally biased stretch (low complexity) spans 499–513; that stretch reads SSPGRGRSPRRGPSP. Coiled coils occupy residues 546–1058 and 1091–1438; these read QDLL…LAES and EMER…GLRS. 2 disordered regions span residues 1184–1226 and 1443–1575; these read LRES…RSAV and GLGL…GRLS. Phosphoserine occurs at positions 1460, 1470, 1476, 1483, 1486, 1490, and 1496. Residues 1505–1704 are a coiled coil; the sequence is EAVRGALREF…DSEVKAGTLQ (200 aa). The segment covering 1510-1529 has biased composition (basic and acidic residues); it reads ALREFLQELRSAQRERDELR. Phosphoserine is present on residues Ser-1575 and Ser-1660. The disordered stretch occupies residues 1962 to 2017; that stretch reads RSAQAQTERTLEARERAHRQRVRGLEEQVSTLKGQLQQELRRSSAPFSPPSGPPEK. The segment covering 1989 to 1999 has biased composition (polar residues); sequence QVSTLKGQLQQ. Over residues 2008–2017 the composition is skewed to pro residues; that stretch reads FSPPSGPPEK.

It belongs to the rootletin family. As to quaternary structure, homomer. Interacts with KLC3, NEK2 and the N-terminus of CEP250. Interacts with CEP44. Interacts with CCDC102B (via N-terminus). Post-translationally, phosphorylated by NEK2 which may regulate its association with centrosomes.

It localises to the cytoplasm. The protein resides in the cytoskeleton. The protein localises to the microtubule organizing center. It is found in the centrosome. Its subcellular location is the centriole. It localises to the cilium basal body. In terms of biological role, major structural component of the ciliary rootlet, a cytoskeletal-like structure in ciliated cells which originates from the basal body at the proximal end of a cilium and extends proximally toward the cell nucleus. Furthermore, is required for the correct positioning of the cilium basal body relative to the cell nucleus, to allow for ciliogenesis. Contributes to centrosome cohesion before mitosis. In Homo sapiens (Human), this protein is Rootletin.